A 118-amino-acid chain; its full sequence is Large ribosomal subunit protein uL18 (118 aa).

Belongs to the universal ribosomal protein uL18 family. In terms of assembly, part of the 50S ribosomal subunit; part of the 5S rRNA/L5/L18/L25 subcomplex. Contacts the 5S and 23S rRNAs.

This is one of the proteins that bind and probably mediate the attachment of the 5S RNA into the large ribosomal subunit, where it forms part of the central protuberance. This is Large ribosomal subunit protein uL18 from Ligilactobacillus salivarius (strain UCC118) (Lactobacillus salivarius).